The sequence spans 223 residues: UPF0173 metal-dependent hydrolase Amet_4625 (223 aa).

This sequence belongs to the UPF0173 family.

In Alkaliphilus metalliredigens (strain QYMF), this protein is UPF0173 metal-dependent hydrolase Amet_4625.